The sequence spans 105 residues: NADH dehydrogenase [ubiquinone] 1 beta subcomplex subunit 2, mitochondrial (105 aa).

The transit peptide at 1 to 33 directs the protein to the mitochondrion; that stretch reads MSDLTRLASFARVGGRLFRSGRARTAGDGGVRH. The interval 85–105 is disordered; that stretch reads PYPDPSQWTDEELGIPPDDED. The span at 93 to 105 shows a compositional bias: acidic residues; the sequence is TDEELGIPPDDED.

The protein belongs to the complex I NDUFB2 subunit family. In terms of assembly, complex I is composed of 45 different subunits.

The protein localises to the mitochondrion inner membrane. In terms of biological role, accessory subunit of the mitochondrial membrane respiratory chain NADH dehydrogenase (Complex I), that is believed not to be involved in catalysis. Complex I functions in the transfer of electrons from NADH to the respiratory chain. The immediate electron acceptor for the enzyme is believed to be ubiquinone. The protein is NADH dehydrogenase [ubiquinone] 1 beta subcomplex subunit 2, mitochondrial (NDUFB2) of Pan troglodytes (Chimpanzee).